Consider the following 180-residue polypeptide: Translation initiation factor IF-3 (180 aa).

The protein belongs to the IF-3 family. In terms of assembly, monomer.

Its subcellular location is the cytoplasm. IF-3 binds to the 30S ribosomal subunit and shifts the equilibrium between 70S ribosomes and their 50S and 30S subunits in favor of the free subunits, thus enhancing the availability of 30S subunits on which protein synthesis initiation begins. The chain is Translation initiation factor IF-3 from Shewanella baltica (strain OS223).